A 647-amino-acid polypeptide reads, in one-letter code: Neutral endopeptidase (647 aa).

In terms of domain architecture, Peptidase M13 spans 1–647; sequence MRRYLAVRGG…LDPEDRITIW (647 aa). A Zn(2+)-binding site is contributed by His496. Glu497 is an active-site residue. Residues His500 and Glu556 each coordinate Zn(2+). The Proton donor role is filled by Asp560.

This sequence belongs to the peptidase M13 family. Zn(2+) is required as a cofactor.

This is Neutral endopeptidase (pepO) from Lactobacillus helveticus (Lactobacillus suntoryeus).